A 175-amino-acid polypeptide reads, in one-letter code: Epididymal-specific lipocalin-8 (175 aa).

An N-terminal signal peptide occupies residues Met-1 to Gly-25. Residues Asn-66 and Asn-74 are each glycosylated (N-linked (GlcNAc...) asparagine). Cys-79 and Cys-166 form a disulfide bridge.

It belongs to the calycin superfamily. Lipocalin family.

The protein localises to the secreted. Functionally, may play a role in male fertility. May act as a retinoid carrier protein within the epididymis. The sequence is that of Epididymal-specific lipocalin-8 (LCN8) from Homo sapiens (Human).